A 179-amino-acid polypeptide reads, in one-letter code: Probable chorismate pyruvate-lyase (179 aa).

Substrate contacts are provided by Arg-82, Leu-120, and Glu-165.

This sequence belongs to the UbiC family.

The protein localises to the cytoplasm. The enzyme catalyses chorismate = 4-hydroxybenzoate + pyruvate. It participates in cofactor biosynthesis; ubiquinone biosynthesis. Its function is as follows. Removes the pyruvyl group from chorismate, with concomitant aromatization of the ring, to provide 4-hydroxybenzoate (4HB) for the ubiquinone pathway. The protein is Probable chorismate pyruvate-lyase of Vibrio parahaemolyticus serotype O3:K6 (strain RIMD 2210633).